The sequence spans 195 residues: Putative archaetidylserine decarboxylase proenzyme (195 aa).

Residue serine 159 is the Schiff-base intermediate with substrate; via pyruvic acid of the active site. Serine 159 is modified (pyruvic acid (Ser); by autocatalysis).

Belongs to the phosphatidylserine decarboxylase family. PSD-A subfamily. In terms of assembly, heterodimer of a large membrane-associated beta subunit and a small pyruvoyl-containing alpha subunit. Requires pyruvate as cofactor. Is synthesized initially as an inactive proenzyme. Formation of the active enzyme involves a self-maturation process in which the active site pyruvoyl group is generated from an internal serine residue via an autocatalytic post-translational modification. Two non-identical subunits are generated from the proenzyme in this reaction, and the pyruvate is formed at the N-terminus of the alpha chain, which is derived from the carboxyl end of the proenzyme. The autoendoproteolytic cleavage occurs by a canonical serine protease mechanism, in which the side chain hydroxyl group of the serine supplies its oxygen atom to form the C-terminus of the beta chain, while the remainder of the serine residue undergoes an oxidative deamination to produce ammonia and the pyruvoyl prosthetic group on the alpha chain. During this reaction, the Ser that is part of the protease active site of the proenzyme becomes the pyruvoyl prosthetic group, which constitutes an essential element of the active site of the mature decarboxylase. In terms of processing, is synthesized initially as an inactive proenzyme. Formation of the active enzyme involves a self-maturation process in which the active site pyruvoyl group is generated from an internal serine residue via an autocatalytic post-translational modification. Two non-identical subunits are generated from the proenzyme in this reaction, and the pyruvate is formed at the N-terminus of the alpha chain, which is derived from the carboxyl end of the proenzyme. The post-translation cleavage follows an unusual pathway, termed non-hydrolytic serinolysis, in which the side chain hydroxyl group of the serine supplies its oxygen atom to form the C-terminus of the beta chain, while the remainder of the serine residue undergoes an oxidative deamination to produce ammonia and the pyruvoyl prosthetic group on the alpha chain.

The protein resides in the cell membrane. The enzyme catalyses archaetidylserine + H(+) = archaetidylethanolamine + CO2. Its function is as follows. Catalyzes the formation of archaetidylethanolamine (PtdEtn) from archaetidylserine (PtdSer). The polypeptide is Putative archaetidylserine decarboxylase proenzyme (Archaeoglobus fulgidus (strain ATCC 49558 / DSM 4304 / JCM 9628 / NBRC 100126 / VC-16)).